Consider the following 428-residue polypeptide: Serine--tRNA ligase (428 aa).

Position 235 to 237 (235 to 237 (TAE)) interacts with L-serine. 266-268 (RSE) contacts ATP. Glu-289 contacts L-serine. 353–356 (EISS) contacts ATP. Ser-389 contributes to the L-serine binding site.

It belongs to the class-II aminoacyl-tRNA synthetase family. Type-1 seryl-tRNA synthetase subfamily. In terms of assembly, homodimer. The tRNA molecule binds across the dimer.

Its subcellular location is the cytoplasm. It carries out the reaction tRNA(Ser) + L-serine + ATP = L-seryl-tRNA(Ser) + AMP + diphosphate + H(+). The catalysed reaction is tRNA(Sec) + L-serine + ATP = L-seryl-tRNA(Sec) + AMP + diphosphate + H(+). It functions in the pathway aminoacyl-tRNA biosynthesis; selenocysteinyl-tRNA(Sec) biosynthesis; L-seryl-tRNA(Sec) from L-serine and tRNA(Sec): step 1/1. Catalyzes the attachment of serine to tRNA(Ser). Is also able to aminoacylate tRNA(Sec) with serine, to form the misacylated tRNA L-seryl-tRNA(Sec), which will be further converted into selenocysteinyl-tRNA(Sec). This Shewanella sp. (strain W3-18-1) protein is Serine--tRNA ligase.